Consider the following 219-residue polypeptide: GTP-binding protein Rit1 (219 aa).

Residues 28-35 (GAGGVGKS), 75-79 (DTAGQ), and 134-137 (NKSD) contribute to the GTP site.

This sequence belongs to the small GTPase superfamily. Ras family. In terms of assembly, interacts with AFDN, the C-terminal domain of RALGDS and RLF, but not with RIN1 and PIK3CA. RLF binds exclusively to the active GTP-bound form. Strongly interacts with BRAF, but only weakly with RAF1. BARF and RAF1 association is dependent upon the GTP-bound state. Interacts with RGL3. Expressed in many tissues.

The protein localises to the cell membrane. It carries out the reaction GTP + H2O = GDP + phosphate + H(+). Its activity is regulated as follows. Alternates between an inactive form bound to GDP and an active form bound to GTP. Its function is as follows. Plays a crucial role in coupling NGF stimulation to the activation of both EPHB2 and MAPK14 signaling pathways and in NGF-dependent neuronal differentiation. Involved in ELK1 transactivation through the Ras-MAPK signaling cascade that mediates a wide variety of cellular functions, including cell proliferation, survival, and differentiation. The sequence is that of GTP-binding protein Rit1 (Rit1) from Mus musculus (Mouse).